A 351-amino-acid chain; its full sequence is Circumsporozoite protein (351 aa).

Residues 1–22 (MKNFILLAVSSILLVDLLPTHF) form the signal peptide. Residues 50 to 266 (AQVRQSASRG…GQNNQGANVP (217 aa)) form a disordered region. Over residues 61–96 (GLGEKPKEGADKEKKKEKEKEKEEEPKKPNENKLKQ) the composition is skewed to basic and acidic residues. The tract at residues 80–88 (KEKEEEPKK) is required for the binding to heparan sulfate proteoglycans (HSPGs) on the surface of host hepatocytes. The tract at residues 93–97 (KLKQP) is region I; contains the proteolytic cleavage site. A compositionally biased stretch (low complexity) spans 97 to 219 (PEQPAAGAGG…AGARGEQPAA (123 aa)). 14 tandem repeats follow at residues 101-109 (AAGAGGEQP), 110-118 (AAGAGGEQP), 119-127 (AAGAGGEQP), 128-136 (AAGARGEQP), 137-145 (AAGAGGEQP), 146-154 (AAGAGGEQP), 155-163 (AAGAGGEQP), 164-172 (AAGAGGEQP), 173-181 (AAGAGGEQP), 182-190 (AAGARGEQP), 191-199 (AAGAGGEQP), 200-208 (AAGAGGEQP), 209-217 (AAGARGEQP), and 218-226 (AAGAGGEQP). The tract at residues 101–226 (AAGAGGEQPA…PAAGAGGEQP (126 aa)) is 14 X 9 AA tandem repeats of A-A-G-A-[GR]-G-E-Q-P. The span at 244 to 256 (GARGGNAGAGKGQ) shows a compositional bias: gly residues. Residues 277-329 (KIRSSVTTEWTPCSVTCGNGVRIRRKGHAGNKKAEDLTMDDLEVEACVMDKCA) form the TSP type-1 domain. Disulfide bonds link Cys-289–Cys-323 and Cys-293–Cys-328. Thr-292 carries an O-linked (Fuc) threonine glycan. Cys-328 is lipidated: GPI-anchor amidated cysteine. A propeptide spans 329 to 351 (AGIFNVVSNSLGLVILLVLALFN) (removed in mature form).

This sequence belongs to the plasmodium circumsporozoite protein family. Post-translationally, during host cell invasion, proteolytically cleaved at the cell membrane in the region I by a papain-like cysteine protease of parasite origin. Cleavage is triggered by the sporozoite contact with highly sulfated heparan sulfate proteoglycans (HSPGs) present on the host hepatocyte cell surface. Cleavage exposes the TSP type-1 (TSR) domain and is required for productive invasion of host hepatocytes but not for adhesion to the host cell membrane. Cleavage is dispensable for sporozoite development in the oocyst, motility and for traversal of host and vector cells. In terms of processing, O-glycosylated; maybe by POFUT2.

The protein localises to the cell membrane. Its subcellular location is the cytoplasm. Its function is as follows. Essential sporozoite protein. In the mosquito vector, required for sporozoite development in the oocyst, migration through the vector hemolymph and entry into the vector salivary glands. In the vertebrate host, required for sporozoite migration through the host dermis and infection of host hepatocytes. Binds to highly sulfated heparan sulfate proteoglycans (HSPGs) on the surface of host hepatocytes. In the vertebrate host, binds to highly sulfated heparan sulfate proteoglycans (HSPGs) on the surface of host hepatocytes and is required for sporozoite invasion of the host hepatocytes. This Plasmodium knowlesi (strain nuri) protein is Circumsporozoite protein.